A 451-amino-acid chain; its full sequence is Protein naked cuticle homolog 2 (451 aa).

The tract at residues 1-108 (MGKLQSKHAA…PRGPGGQRLN (108 aa)) is disordered. Gly-2 is lipidated: N-myristoyl glycine. The interval 2-173 (GKLQSKHAAA…GSSKTLRVKL (172 aa)) is targeting to the basolateral cell membrane. Composition is skewed to basic and acidic residues over residues 34-63 (KGAE…REDQ) and 89-99 (DGERAANREGP). The interval 113–178 (QCDVSVEEDD…LRVKLTVSPE (66 aa)) is interaction with DVL1, DVL2 and DVL3. The 36-residue stretch at 119-154 (EEDDRQEWTFTLYDFDNCGKVTREDMSSLMHTIYEV) folds into the EF-hand domain. The Ca(2+) site is built by Asp-132, Asp-134, Lys-138, and Asp-143. Disordered stretches follow at residues 162-237 (SSGS…PYCV) and 256-408 (YTSR…TVEH). Over residues 180–215 (SSKRKEGPPAGQDREPTRCRMEGELAEEPRVADRRL) the composition is skewed to basic and acidic residues. Residues 300-385 (QVLVEHVVPA…PPPPYGHKRY (86 aa)) form an interaction with TGFA region. Over residues 332 to 351 (KSPKGSGKPPGVPASSKSGK) the composition is skewed to low complexity.

Belongs to the NKD family. Interacts with DVL1, DVL2, DVL3 and PPP2R3A. Interacts with RNF25 and TGFA (via cytoplasmic domain). Post-translationally, ubiquitinated, leading to rapid proteasomal degradation. Interaction with TGFA interferes with RNF25 binding and protects against ubiquitination mediated by RNF25. As to expression, expressed in kidney, lung, pancreas and spleen.

It is found in the cell membrane. Its subcellular location is the cytoplasm. It localises to the cytoplasmic vesicle. Cell autonomous antagonist of the canonical Wnt signaling pathway. May activate a second Wnt signaling pathway that controls planar cell polarity. Required for processing of TGFA and for targeting of TGFA to the basolateral membrane of polarized epithelial cells. The protein is Protein naked cuticle homolog 2 (NKD2) of Homo sapiens (Human).